A 272-amino-acid polypeptide reads, in one-letter code: MTVSAALQQSADEAGLLPSHQARLDYRTGKGWSTAGVANGFVQGNLAIIPERYAGAFHRFCQLNPKPCPIIGMSDPGNPHIPALGADLDIRTDVPRYRVWRDGEMVEEPTDLLAHWRDDLVTFVLGCSFSFEEALMADGLPIRHIEQGCRVPMYRTNIACTPSGQFAGPMVVSMRPFKPAQAIRAVQITTRFPAVHGAPVHLGLPEQIGIADINTPDYGDPVPVGTDEIPVFWACGVTPQAVIAAAKLPFAITHAPGLMLITDLRNKDLAVL.

Belongs to the D-glutamate cyclase family.

This Bradyrhizobium sp. (strain ORS 278) protein is Putative hydro-lyase BRADO2538.